The chain runs to 251 residues: 5'-nucleotidase SurE 1 (251 aa).

4 residues coordinate a divalent metal cation: aspartate 8, aspartate 9, serine 39, and asparagine 95.

The protein belongs to the SurE nucleotidase family. It depends on a divalent metal cation as a cofactor.

The protein localises to the cytoplasm. The enzyme catalyses a ribonucleoside 5'-phosphate + H2O = a ribonucleoside + phosphate. Nucleotidase that shows phosphatase activity on nucleoside 5'-monophosphates. This is 5'-nucleotidase SurE 1 from Thermus thermophilus (strain ATCC BAA-163 / DSM 7039 / HB27).